The following is a 520-amino-acid chain: Anthranilate synthase component 1 (520 aa).

L-tryptophan-binding positions include S40 and 291–293 (PYM). 328–329 (GT) is a chorismate binding site. Residue E361 coordinates Mg(2+). Chorismate is bound by residues Y449, R469, 483 to 485 (GAG), and G485. E498 contributes to the Mg(2+) binding site.

This sequence belongs to the anthranilate synthase component I family. Heterotetramer consisting of two non-identical subunits: a beta subunit (TrpG) and a large lpha subunit (TrpE). Mg(2+) is required as a cofactor.

The catalysed reaction is chorismate + L-glutamine = anthranilate + pyruvate + L-glutamate + H(+). The protein operates within amino-acid biosynthesis; L-tryptophan biosynthesis; L-tryptophan from chorismate: step 1/5. Cooperatively feedback inhibited by tryptophan. Part of a heterotetrameric complex that catalyzes the two-step biosynthesis of anthranilate, an intermediate in the biosynthesis of L-tryptophan. In the first step, the glutamine-binding beta subunit (TrpG) of anthranilate synthase (AS) provides the glutamine amidotransferase activity which generates ammonia as a substrate that, along with chorismate, is used in the second step, catalyzed by the large alpha subunit of AS (TrpE) to produce anthranilate. In the absence of TrpG, TrpE can synthesize anthranilate directly from chorismate and high concentrations of ammonia. The polypeptide is Anthranilate synthase component 1 (trpE) (Escherichia coli (strain K12)).